Reading from the N-terminus, the 188-residue chain is 3-deoxy-D-manno-octulosonate 8-phosphate phosphatase KdsC (188 aa).

Mg(2+) contacts are provided by aspartate 32 and aspartate 34. Substrate-binding positions include aspartate 34, 55-59 (NVRDG), arginine 63, arginine 78, arginine 86, and lysine 102. Aspartate 125 contributes to the Mg(2+) binding site.

It belongs to the KdsC family. Homotetramer. It depends on Mg(2+) as a cofactor.

The catalysed reaction is 3-deoxy-alpha-D-manno-2-octulosonate-8-phosphate + H2O = 3-deoxy-alpha-D-manno-oct-2-ulosonate + phosphate. It functions in the pathway carbohydrate biosynthesis; 3-deoxy-D-manno-octulosonate biosynthesis; 3-deoxy-D-manno-octulosonate from D-ribulose 5-phosphate: step 3/3. Its pathway is bacterial outer membrane biogenesis; lipopolysaccharide biosynthesis. Its function is as follows. Catalyzes the hydrolysis of 3-deoxy-D-manno-octulosonate 8-phosphate (KDO 8-P) to 3-deoxy-D-manno-octulosonate (KDO) and inorganic phosphate. In Escherichia coli (strain K12), this protein is 3-deoxy-D-manno-octulosonate 8-phosphate phosphatase KdsC.